The sequence spans 194 residues: MSGGPVPVWKKYTTRPQGIWEKIRQLLVLVPNRSSGNPLVSLFRQVPPGERIKEAQNYKDPVTIPAGDIKGNPYFKRDYRRNYPQVHTFNQTKISGLLNLGSESNPRISIGEKGNKELAVFTNGQDVSLASTLKSVPASVVKGEVLGKSGEPIVAPSLNKFKWEILPEPVHGMYSEAYPCRIFTEKKVRSQSSA.

Fungal-specific subunit of the mitochondrial membrane respiratory chain NADH dehydrogenase (Complex I). Complex I functions in the transfer of electrons from NADH to the respiratory chain. The immediate electron acceptor for the enzyme is believed to be ubiquinone. Plays a role in cell wall integrity and is involved in osmotic and oxidative resistance, yeast to hypha transition, and virulence via providing the ability to damage and invade host cells such as oral epithelial cells. The sequence is that of NADH-ubiquinone oxidoreductase subunit NUO2 from Candida albicans (strain SC5314 / ATCC MYA-2876) (Yeast).